A 520-amino-acid chain; its full sequence is Anthranilate synthase component 1 (520 aa).

L-tryptophan-binding positions include S40 and 291 to 293 (PYM). 328–329 (GT) serves as a coordination point for chorismate. A Mg(2+)-binding site is contributed by E361. Chorismate contacts are provided by residues Y449, R469, 483–485 (GAG), and G485. E498 contacts Mg(2+).

Belongs to the anthranilate synthase component I family. As to quaternary structure, heterotetramer consisting of two non-identical subunits: a beta subunit (TrpG) and a large lpha subunit (TrpE). Mg(2+) serves as cofactor.

The enzyme catalyses chorismate + L-glutamine = anthranilate + pyruvate + L-glutamate + H(+). Its pathway is amino-acid biosynthesis; L-tryptophan biosynthesis; L-tryptophan from chorismate: step 1/5. With respect to regulation, cooperatively feedback inhibited by tryptophan. Its function is as follows. Part of a heterotetrameric complex that catalyzes the two-step biosynthesis of anthranilate, an intermediate in the biosynthesis of L-tryptophan. In the first step, the glutamine-binding beta subunit (TrpG) of anthranilate synthase (AS) provides the glutamine amidotransferase activity which generates ammonia as a substrate that, along with chorismate, is used in the second step, catalyzed by the large alpha subunit of AS (TrpE) to produce anthranilate. In the absence of TrpG, TrpE can synthesize anthranilate directly from chorismate and high concentrations of ammonia. This is Anthranilate synthase component 1 (trpE) from Escherichia coli (strain K12).